A 486-amino-acid chain; its full sequence is Vanillin dehydrogenase (486 aa).

NAD(+)-binding positions include 210–211, 230–231, and 252–254; these read GP, GS, and ELG. Residue glutamate 252 is the Proton acceptor of the active site. Catalysis depends on cysteine 286, which acts as the Nucleophile. 380-382 contributes to the NAD(+) binding site; that stretch reads EVF.

The protein belongs to the aldehyde dehydrogenase family.

It carries out the reaction vanillin + NAD(+) + H2O = vanillate + NADH + 2 H(+). Its function is as follows. Catalyzes NAD(+)-dependent oxidation of vanillin to vanillate. Also oxidizes other aromatic aldehydes including benzaldehyde, coniferyl aldehyde and cinnamaldehyde, but has a preference for vanillin. Not active with NADP(+). Involved in the degradation pathway of lignin-derived aromatic compounds of plant cell walls. Catalyzes the conversion of vanillin to vanillate due to toxicity of vanillin to the cells. This Amycolatopsis sp. (strain ATCC 39116 / 75iv2) protein is Vanillin dehydrogenase.